Consider the following 49-residue polypeptide: uncharacterized protein (49 aa).

The signal sequence occupies residues 1–22 (MIQKPILLSSFLFLYIRALLHS).

This is an uncharacterized protein from Saccharomyces cerevisiae (strain ATCC 204508 / S288c) (Baker's yeast).